Here is an 848-residue protein sequence, read N- to C-terminus: ATP-dependent Clp protease ATP-binding subunit ClpC1 (848 aa).

In terms of domain architecture, Clp R spans 2-144 (FERFTDRARK…RQQVIQLLSG (143 aa)). Repeat regions lie at residues 5–70 (FTDR…IGQG) and 80–144 (FTPR…LLSG). An i region spans residues 171 to 418 (LDQFGRNLTA…RMRIRRMTAP (248 aa)). 216–223 (GEPGVGKT) lines the ATP pocket. In terms of domain architecture, UVR spans 425–460 (DEKIAEARREKESAIDAQDFEKAASLRDREKTLVAQ). Residues 479-670 (VDDEQIAEVL…VLIFTSNLGT (192 aa)) are II. An ATP-binding site is contributed by 553–560 (GPSGVGKT). Positions 821-848 (TGTRKPPAEPDLAKAGAHSAGGPEPAAR) are disordered.

It belongs to the ClpA/ClpB family. ClpC subfamily.

ATP-dependent specificity component of the Clp protease. It directs the protease to specific substrates. Can perform chaperone functions in the absence of ClpP. This is ATP-dependent Clp protease ATP-binding subunit ClpC1 (clpC1) from Mycobacterium tuberculosis (strain CDC 1551 / Oshkosh).